The sequence spans 930 residues: Translation initiation factor IF-2 (930 aa).

Over residues 50-67 (FKPAAAPKVEAKPAAPKV) the composition is skewed to low complexity. Disordered regions lie at residues 50–217 (FKPA…SSEE) and 260–346 (EVVP…HELP). Basic and acidic residues-rich tracts occupy residues 68–90 (SAEK…EAKP) and 110–125 (FKAE…AERR). The segment covering 129–141 (KGNNRDQQQNGNR) has biased composition (low complexity). Basic and acidic residues-rich tracts occupy residues 157–167 (RDNRRFNDQAK) and 262–295 (VPEK…DGPR). Low complexity predominate over residues 309–318 (NQKNSNWNNN). The segment covering 337 to 346 (VTERKFHELP) has biased composition (basic and acidic residues). The 168-residue stretch at 432 to 599 (ERPPVVTIMG…TVLLVAEIQE (168 aa)) folds into the tr-type G domain. Positions 441-448 (GHVDHGKT) are G1. 441 to 448 (GHVDHGKT) serves as a coordination point for GTP. A G2 region spans residues 466 to 470 (GITQH). The interval 487 to 490 (DTPG) is G3. Residues 487–491 (DTPGH) and 541–544 (NKID) contribute to the GTP site. Residues 541 to 544 (NKID) form a G4 region. Positions 577-579 (SAK) are G5.

This sequence belongs to the TRAFAC class translation factor GTPase superfamily. Classic translation factor GTPase family. IF-2 subfamily.

It is found in the cytoplasm. In terms of biological role, one of the essential components for the initiation of protein synthesis. Protects formylmethionyl-tRNA from spontaneous hydrolysis and promotes its binding to the 30S ribosomal subunits. Also involved in the hydrolysis of GTP during the formation of the 70S ribosomal complex. This is Translation initiation factor IF-2 from Streptococcus pneumoniae (strain CGSP14).